Here is a 308-residue protein sequence, read N- to C-terminus: Acetyl-coenzyme A carboxylase carboxyl transferase subunit beta (308 aa).

Residues 26–295 form the CoA carboxyltransferase N-terminal domain; that stretch reads LWIKDPETGE…EQKPLEPEIL (270 aa).

It belongs to the AccD/PCCB family. In terms of assembly, acetyl-CoA carboxylase is a heterohexamer composed of biotin carboxyl carrier protein (AccB), biotin carboxylase (AccC) and two subunits each of ACCase subunit alpha (AccA) and ACCase subunit beta (AccD).

It is found in the cytoplasm. The catalysed reaction is N(6)-carboxybiotinyl-L-lysyl-[protein] + acetyl-CoA = N(6)-biotinyl-L-lysyl-[protein] + malonyl-CoA. The protein operates within lipid metabolism; malonyl-CoA biosynthesis; malonyl-CoA from acetyl-CoA: step 1/1. Its function is as follows. Component of the acetyl coenzyme A carboxylase (ACC) complex. Biotin carboxylase (BC) catalyzes the carboxylation of biotin on its carrier protein (BCCP) and then the CO(2) group is transferred by the transcarboxylase to acetyl-CoA to form malonyl-CoA. This chain is Acetyl-coenzyme A carboxylase carboxyl transferase subunit beta, found in Mesorhizobium japonicum (strain LMG 29417 / CECT 9101 / MAFF 303099) (Mesorhizobium loti (strain MAFF 303099)).